The primary structure comprises 381 residues: Translation initiation factor eIF2B subunit beta (381 aa).

The tract at residues 125–148 (LQKPEQPHQNRKNSSGSSSMKTKT) is disordered. Residues 136 to 145 (KNSSGSSSMK) show a composition bias toward polar residues.

It belongs to the eIF-2B alpha/beta/delta subunits family. In terms of assembly, component of the translation initiation factor 2B (eIF2B) complex which is a heterodecamer of two sets of five different subunits: alpha, beta, gamma, delta and epsilon. Subunits alpha, beta and delta comprise a regulatory subcomplex and subunits epsilon and gamma comprise a catalytic subcomplex. Within the complex, the hexameric regulatory complex resides at the center, with the two heterodimeric catalytic subcomplexes bound on opposite sides.

It localises to the cytoplasm. It is found in the cytosol. Functionally, acts as a component of the translation initiation factor 2B (eIF2B) complex, which catalyzes the exchange of GDP for GTP on the eukaryotic initiation factor 2 (eIF2) complex gamma subunit. Its guanine nucleotide exchange factor activity is repressed when bound to eIF2 complex phosphorylated on the alpha subunit, thereby limiting the amount of methionyl-initiator methionine tRNA available to the ribosome and consequently global translation is repressed. It activates the synthesis of GCN4 in yeast under amino acid starvation conditions by suppressing the inhibitory effects of multiple AUG codons present in the leader of GCN4 mRNA. It may promote either repression or activation of GCN4 expression depending on amino acid availability. GCD6 and GCD7 repress GCN4 expression at the translational level by ensuring that ribosomes which have translated UORF1 will reinitiate at UORF2, -3, or -4 and thus fail to reach the GCN4 start site. This chain is Translation initiation factor eIF2B subunit beta (GCD7), found in Saccharomyces cerevisiae (strain ATCC 204508 / S288c) (Baker's yeast).